A 477-amino-acid chain; its full sequence is MTRQSLWDVSDTDVEDGEIRINVGGFKRRLRSHTLLRFPETRLGRLLLCHSREAILELCDDYDDVQREFYFDRNPELFPYVLHFYHTGKLHVMAELCVFSFSQEIEYWGINEFFIDSCCSYSYHGRKVEPEQEKWDEQSDQESTTSSFDEILAFYNDASKFDGQPLGNFRRQLWLALDNPGYSVLSRVFSVLSILVVLGSIITMCLNSLPDFQIPDSQGNPGEDPRFEIVEHFGIAWFTFELVARFAVAPDFLKFFKNALNLIDLMSIVPFYITLVVNLVVESSPTLANLGRVAQVLRLMRIFRILKLARHSTGLRSLGATLKYSYKEVGLLLLYLSVGISIFSVVAYTIEKEENEGLATIPACWWWATVSMTTVGYGDVVPGTTAGKLTASACILAGILVVVLPITLIFNKFSHFYRRQKQLESAMRSCDFGDGMKEVPSVNLRDYYAHKVKSLMASLTNMSRSSPSELSLDDSLH.

Residues Met-1 to Val-184 lie on the Cytoplasmic side of the membrane. A helical transmembrane segment spans residues Leu-185–Leu-206. At Asn-207 to Pro-225 the chain is on the extracellular side. The helical transmembrane segment at Arg-226–Val-248 threads the bilayer. The Cytoplasmic portion of the chain corresponds to Ala-249–Ala-259. A helical transmembrane segment spans residues Leu-260–Val-280. Residues Val-281–Leu-290 lie on the Extracellular side of the membrane. A helical; Voltage-sensor transmembrane segment spans residues Gly-291–His-311. Residues Ser-312 to Tyr-326 lie on the Cytoplasmic side of the membrane. The chain crosses the membrane as a helical span at residues Lys-327–Tyr-348. The Extracellular portion of the chain corresponds to Thr-349 to Ile-361. Positions Pro-362–Thr-373 form an intramembrane region, helical. A Selectivity filter motif is present at residues Thr-374–Asp-379. Residues Thr-374–Val-381 lie within the membrane without spanning it. The Extracellular segment spans residues Pro-382–Lys-388. The chain crosses the membrane as a helical span at residues Leu-389 to Tyr-417. Residues Arg-418–His-477 are Cytoplasmic-facing.

The protein belongs to the potassium channel family. S (TC 1.A.1.2) subfamily. Kv9.2/KCNS2 sub-subfamily. In terms of assembly, heterotetramer with KCNB1 and KCNB2. Does not form homomultimers. Detected in brain, but not in the other tissues tested. Expression was highest in the olfactory bulb, cerebral cortex, hippocampus, habenula, basolateral amygdaloid nuclei and cerebellum.

The protein localises to the cell membrane. In terms of biological role, potassium channel regulatory subunit that modulate the delayed rectifier voltage-gated potassium channel activity of KCNB1 and KCNB2 by altering their kinetics, expression levels, and shifting the half-inactivation potential to more polarized values. While it does not form functional channels on its own, it can form functional heterotetrameric channels with KCNB1 and KCNB2. Each regulatory subunit has unique regulatory properties that can lead to extensive inhibition, significant changes in kinetics, and/or substantial shifts in the voltage dependencies of the inactivation process. This Mus musculus (Mouse) protein is Delayed-rectifier potassium channel regulatory subunit KCNS2.